The sequence spans 125 residues: Large ribosomal subunit protein bL12 (125 aa).

The protein belongs to the bacterial ribosomal protein bL12 family. In terms of assembly, homodimer. Part of the ribosomal stalk of the 50S ribosomal subunit. Forms a multimeric L10(L12)X complex, where L10 forms an elongated spine to which 2 to 4 L12 dimers bind in a sequential fashion. Binds GTP-bound translation factors.

Functionally, forms part of the ribosomal stalk which helps the ribosome interact with GTP-bound translation factors. Is thus essential for accurate translation. This chain is Large ribosomal subunit protein bL12, found in Paraburkholderia phymatum (strain DSM 17167 / CIP 108236 / LMG 21445 / STM815) (Burkholderia phymatum).